A 429-amino-acid chain; its full sequence is 28S rRNA (cytosine-C(5))-methyltransferase (429 aa).

Gly-2 is subject to N-acetylglycine. Residue Ser-167 is modified to Phosphoserine. Residues 234–240 (CAAPGNK), Asp-258, Arg-263, and Asp-305 contribute to the S-adenosyl-L-methionine site. Cys-359 serves as the catalytic Nucleophile.

This sequence belongs to the class I-like SAM-binding methyltransferase superfamily. RsmB/NOP family. As to expression, ubiquitous. Detected in placenta, heart and skeletal muscle.

Its subcellular location is the nucleus. It is found in the nucleolus. It catalyses the reaction cytidine(3782) in 28S rRNA + S-adenosyl-L-methionine = 5-methylcytidine(3782) in 28S rRNA + S-adenosyl-L-homocysteine + H(+). In terms of biological role, S-adenosyl-L-methionine-dependent methyltransferase that specifically methylates the C(5) position of cytosine 3782 (m5C3782) in 28S rRNA. m5C3782 promotes protein translation without affecting ribosome biogenesis and fidelity. Required for corpus callosum and cerebral cortex development. The polypeptide is 28S rRNA (cytosine-C(5))-methyltransferase (Homo sapiens (Human)).